Consider the following 266-residue polypeptide: Putative carbamate hydrolase RutD (266 aa).

It belongs to the AB hydrolase superfamily. Hydrolase RutD family.

It carries out the reaction carbamate + 2 H(+) = NH4(+) + CO2. In terms of biological role, involved in pyrimidine catabolism. May facilitate the hydrolysis of carbamate, a reaction that can also occur spontaneously. The sequence is that of Putative carbamate hydrolase RutD from Escherichia coli O139:H28 (strain E24377A / ETEC).